The primary structure comprises 246 residues: Probable site-specific recombinase in afa region (246 aa).

Positions 40–225 constitute a Tyr recombinase domain; it reads ATPAYLLAPE…FALDMAATLA (186 aa). Residues Arg-75, Lys-102, His-177, Arg-180, and His-203 contribute to the active site. Tyr-212 acts as the O-(3'-phospho-DNA)-tyrosine intermediate in catalysis.

It belongs to the 'phage' integrase family.

The chain is Probable site-specific recombinase in afa region (int) from Escherichia coli.